A 489-amino-acid polypeptide reads, in one-letter code: Potassium voltage-gated channel subfamily A member 7 (489 aa).

Residues V176–T196 traverse the membrane as a helical segment. Residue N224 is glycosylated (N-linked (GlcNAc...) asparagine). The chain crosses the membrane as a helical span at residues F242–V262. C264 carries S-palmitoyl cysteine lipidation. Residues V274–L294 traverse the membrane as a helical segment. Residues I309–S328 traverse the membrane as a helical; Voltage-sensor segment. The helical transmembrane segment at L345 to F365 threads the bilayer. The Selectivity filter motif lies at T391–D396. A helical membrane pass occupies residues I406–I426.

It belongs to the potassium channel family. A (Shaker) (TC 1.A.1.2) subfamily. Kv1.7/KCNA7 sub-subfamily. Heterotetramer of potassium channel proteins. As to expression, detected in heart, skeletal muscle, brain, and pancreatic islet cells.

Its subcellular location is the membrane. The enzyme catalyses K(+)(in) = K(+)(out). Functionally, mediates the voltage-dependent potassium ion permeability of excitable membranes. Assuming opened or closed conformations in response to the voltage difference across the membrane, the protein forms a potassium-selective channel through which potassium ions may pass in accordance with their electrochemical gradient. Channels formed by isoform 1 inactivate faster than channels formed by isoform 2. This Mus musculus (Mouse) protein is Potassium voltage-gated channel subfamily A member 7 (Kcna7).